A 146-amino-acid chain; its full sequence is Angiogenin (146 aa).

An N-terminal signal peptide occupies residues M1–A24. Residue Q25 is modified to Pyrrolidone carboxylic acid. H37 functions as the Proton acceptor in the catalytic mechanism. R45 is a tRNA binding site. 3 cysteine pairs are disulfide-bonded: C50–C105, C63–C116, and C81–C131. Residues R55 to L59 carry the Nucleolar localization signal motif. TRNA is bound by residues C105 and I127. The active-site Proton donor is H138.

Belongs to the pancreatic ribonuclease family. In terms of assembly, homodimer. Interacts with RNH1; inhibiting ANG ribonuclease activity. Interacts with PCNA.

It is found in the secreted. The protein resides in the nucleus. It localises to the nucleolus. The protein localises to the cytoplasm. Its subcellular location is the stress granule. With respect to regulation, has weak tRNA ribonuclease activity by itself due to partial autoinhibition by its C-terminus, which folds into a short alpha-helix that partially occludes the substrate-binding site. In absence of stress, the ribonuclease activity is inhibited by RNH1 in the cytoplasm. In response to stress, dissociates from RNH1 in the cytoplasm and associates with cytoplasmic ribosomes with vacant A-sites: ribosomes directly activate the tRNA ribonuclease activity of ANG by refolding the C-terminal alpha-helix. In response to stress, the angiogenic activity of ANG is inhibited by RNH1 in the nucleus. Its function is as follows. Secreted ribonuclease that can either promote or restrict cell proliferation of target cells, depending on the context. Endocytosed in target cells via its receptor PLXNB2 and translocates to the cytoplasm or nucleus. Under stress conditions, localizes to the cytoplasm and promotes the assembly of stress granules (SGs): specifically cleaves a subset of tRNAs within anticodon loops to produce tRNA-derived stress-induced fragments (tiRNAs), resulting in translation repression and inhibition of cell proliferation. tiRNas also prevent formation of apoptosome, thereby promoting cell survival. Preferentially cleaves RNAs between a pyrimidine and an adenosine residue, suggesting that it cleaves the anticodon loop of tRNA(Ala) (32-UUAGCAU-38) after positions 33 and 36. Cleaves a subset of tRNAs, including tRNA(Ala), tRNA(Glu), tRNA(Gly), tRNA(Lys), tRNA(Val), tRNA(His), tRNA(Asp) and tRNA(Sec). Under growth conditions and in differentiated cells, translocates to the nucleus and stimulates ribosomal RNA (rRNA) transcription, including that containing the initiation site sequences of 45S rRNA, thereby promoting cell growth and proliferation. Angiogenin induces vascularization of normal and malignant tissues via its ability to promote rRNA transcription. Involved in hematopoietic stem and progenitor cell (HSPC) growth and survival by promoting rRNA transcription in growth conditions and inhibiting translation in response to stress, respectively. Mediates the crosstalk between myeloid and intestinal epithelial cells to protect the intestinal epithelial barrier integrity: secreted by myeloid cells and promotes intestinal epithelial cells proliferation and survival. Also mediates osteoclast-endothelial cell crosstalk in growing bone: produced by osteoclasts and protects the neighboring vascular cells against senescence by promoting rRNA transcription. In Trachypithecus francoisi (Francois' leaf monkey), this protein is Angiogenin (ANG).